The following is a 646-amino-acid chain: Kinesin-like protein klp-20 (646 aa).

A Kinesin motor domain is found at 6–331; the sequence is KVKVVVRCRP…LRYANRAKNI (326 aa). 91-98 is an ATP binding site; sequence GQTGTGKT. Residues 342-552 adopt a coiled-coil conformation; that stretch reads KDAQLRKFQL…LRKELLLNIA (211 aa). The segment at 525-550 is interaction with klp-11; it reads LEEDHQRQVEAMLDDIRQLRKELLLN. The disordered stretch occupies residues 623 to 646; it reads TAEHRPRTSSKKHRASIRLQQLLT. Over residues 629–638 the composition is skewed to basic residues; the sequence is RTSSKKHRAS.

This sequence belongs to the TRAFAC class myosin-kinesin ATPase superfamily. Kinesin family. Kinesin II subfamily. As to quaternary structure, component of the kinesin II motor complex, a heterotrimeric complex composed of kap-1, klp-11 and klp-20. Interacts (via C-terminus) with klp-11 (via C-terminus) to form a heterodimer. Furthermore, within the heterodimer, the C-termini of klp-20 and klp-11 interact to form a coiled coil (stalk) or tail domain, and this is necessary for association with kap-1, and kinesin II motor complex activity upon IFT cargo binding. Prior to cargo binding, the klp-11/klp-20 heterodimer is autoinhibited by the tail domain of the heterodimer, which folds onto the kinesin motor domain. Cargo binding to the heterodimer relieves the autoinhibition, and allows for an extended conformation of the tail domain, and function of the heterodimer.

Its subcellular location is the cell projection. It is found in the cilium. The protein resides in the cytoplasm. It localises to the cytoskeleton. Its function is as follows. Component of the kinesin II motor complex (composed of kap-1 and the heterodimeric motor proteins klp-11 and klp-20) which is required for intraflagellar transport (IFT). Heterodimerizes with klp-11 to form a 'processive' molecular motor upon IFT cargo binding, which, within the kinesin II motor complex, binds to and moves along microtubules in a unidirectional manner (without dissociation of the heterodimer), and in turn, is responsible for the IFT of cargo. Specifically, the kinesin II motor complex, together with the kinesin motor protein osm-3 moves along microtubules and is required for anterograde IFT along the middle segment of the sensory neuron cilia. In particular, the kinesin II motor complex delivers specific ciliary cargo proteins such as che-3 which are related to motility to ciliary tips. This is likely mediated by IFT complexes A and B. The chain is Kinesin-like protein klp-20 from Caenorhabditis elegans.